The primary structure comprises 362 residues: RING finger protein 32 (362 aa).

The segment at 127–169 (CPICKEEFELRPQVLLSCSHVFHKACLQAFEKFTNKKTCPLCR) adopts an RING-type 1; atypical zinc-finger fold. The IQ domain maps to 186 to 215 (RIKCVTRIQAYWRGCVVRKWYRNLRKTVPP). An RING-type 2; atypical zinc finger spans residues 293 to 352 (CSICLAPLSAAGGQRVGAGRRSREMALLSCSHVFHHACLLALEEFSVGDRPPFHACPLCR).

Highly expressed in testis, less abundant in ovary.

The protein resides in the cytoplasm. Functionally, may play a role in sperm formation. The polypeptide is RING finger protein 32 (RNF32) (Homo sapiens (Human)).